Consider the following 333-residue polypeptide: Geranylgeranyl pyrophosphate synthase olcC (333 aa).

Residues K61, R64, and H93 each coordinate isopentenyl diphosphate. Residues D100 and D104 each coordinate Mg(2+). R109 lines the dimethylallyl diphosphate pocket. An isopentenyl diphosphate-binding site is contributed by R110. Dimethylallyl diphosphate-binding residues include K187, T188, and Q221. D224 serves as a coordination point for Mg(2+). Dimethylallyl diphosphate-binding residues include N228, K238, and K248.

It belongs to the FPP/GGPP synthase family. Mg(2+) is required as a cofactor.

It catalyses the reaction isopentenyl diphosphate + dimethylallyl diphosphate = (2E)-geranyl diphosphate + diphosphate. The catalysed reaction is isopentenyl diphosphate + (2E)-geranyl diphosphate = (2E,6E)-farnesyl diphosphate + diphosphate. It carries out the reaction isopentenyl diphosphate + (2E,6E)-farnesyl diphosphate = (2E,6E,10E)-geranylgeranyl diphosphate + diphosphate. It functions in the pathway secondary metabolite biosynthesis; terpenoid biosynthesis. Geranylgeranyl pyrophosphate synthase; part of the gene cluster that mediates the biosynthesis of 15-deoxyoxalicine B. The first step of the pathway is the synthesis of nicotinyl-CoA from nicotinic acid by the nicotinic acid-CoA ligase olcI. Nicotinyl-CoA is then a substrate of polyketide synthase olcA to produce 4-hydroxy-6-(3-pyridinyl)-2H-pyran-2-one (HPPO) which is further prenylated by the polyprenyl transferase olcH to yield geranylgeranyl-HPPO. Geranylgeranyl pyrophosphate is provided by the cluster-specific geranylgeranyl pyrophosphate synthase olcC. The FAD-dependent monooxygenase olcE catalyzes the epoxidation of geranylgeranyl-HPPO and the terpene cyclase olcD catalyzes the cyclization of the terpenoid component, resulting in the formation of the tricyclic terpene moiety seen in predecaturin E. The cytochrome P450 monooxygenase then catalyzes the allylic oxidation of predecaturin E, which is followed by spirocylization with concomitant loss of one molecule of water to form decaturin E. Decaturin E is the substrate of the cytochrome P450 monooxygenase olcJ which hydroxylates it at the C-29 position to form decaturin F. The short-chain dehydrogenase/reductase olcF may catalyze the oxidation of decaturin F to generate the 29-hydroxyl-27-one intermediate, and subsequent hemiacetal formation probably leads to the formation of decaturin C. The dioxygenase olcK may be a peroxisomal enzyme that catalyzes the hydroxylation of decaturin C into decaturin A once decaturin C is shuttled into the peroxisome by the MFS transporter olcL. Finally the cytochrome P450 monooxygenase olcB catalyzes the oxidative rearrangement to yield 15-deoxyoxalicine B. In the absence of olcJ, decaturin E may be shunted to a pathway in which it is oxidized to a ketone, possibly by olcF, to form decaturin D, which undergoes further allylic oxidation to yield decaturin G. Moreover, in the absence of oclK or oclL, oclB can convert decaturin C into 15-deoxyoxalicine A. The chain is Geranylgeranyl pyrophosphate synthase olcC from Penicillium canescens.